Consider the following 289-residue polypeptide: Probable protein phosphatase 2C 39 (289 aa).

Residues 41 to 288 (THGFHLVKGK…DDISVVVVKF (248 aa)) form the PPM-type phosphatase domain. Residues Asp-78, Gly-79, Asp-240, and Asp-279 each coordinate Mn(2+).

It belongs to the PP2C family. Mg(2+) serves as cofactor. Requires Mn(2+) as cofactor.

It catalyses the reaction O-phospho-L-seryl-[protein] + H2O = L-seryl-[protein] + phosphate. The catalysed reaction is O-phospho-L-threonyl-[protein] + H2O = L-threonyl-[protein] + phosphate. The protein is Probable protein phosphatase 2C 39 of Arabidopsis thaliana (Mouse-ear cress).